The primary structure comprises 272 residues: Phosphoglycolate phosphatase (272 aa).

The Nucleophile role is filled by Asp19. Mg(2+) contacts are provided by Asp19, Asp21, and Asp182.

It belongs to the HAD-like hydrolase superfamily. CbbY/CbbZ/Gph/YieH family. The cofactor is Mg(2+).

It carries out the reaction 2-phosphoglycolate + H2O = glycolate + phosphate. It participates in organic acid metabolism; glycolate biosynthesis; glycolate from 2-phosphoglycolate: step 1/1. Its function is as follows. Specifically catalyzes the dephosphorylation of 2-phosphoglycolate. Is involved in the dissimilation of the intracellular 2-phosphoglycolate formed during the DNA repair of 3'-phosphoglycolate ends, a major class of DNA lesions induced by oxidative stress. The polypeptide is Phosphoglycolate phosphatase (Pseudomonas putida (strain ATCC 47054 / DSM 6125 / CFBP 8728 / NCIMB 11950 / KT2440)).